The primary structure comprises 560 residues: DNA ligase B (560 aa).

Lys-124 serves as the catalytic N6-AMP-lysine intermediate.

Belongs to the NAD-dependent DNA ligase family. LigB subfamily.

The enzyme catalyses NAD(+) + (deoxyribonucleotide)n-3'-hydroxyl + 5'-phospho-(deoxyribonucleotide)m = (deoxyribonucleotide)n+m + AMP + beta-nicotinamide D-nucleotide.. Catalyzes the formation of phosphodiester linkages between 5'-phosphoryl and 3'-hydroxyl groups in double-stranded DNA using NAD as a coenzyme and as the energy source for the reaction. The chain is DNA ligase B from Shigella flexneri serotype 5b (strain 8401).